A 401-amino-acid chain; its full sequence is Argininosuccinate synthase (401 aa).

Residues 8–16 (AYSGGLDTS) and Ala35 each bind ATP. Positions 86 and 91 each coordinate L-citrulline. Gly116 serves as a coordination point for ATP. The L-aspartate site is built by Thr118, Asn122, and Asp123. Asn122 contacts L-citrulline. L-citrulline is bound by residues Arg126, Ser175, Ser184, Glu260, and Tyr272.

It belongs to the argininosuccinate synthase family. Type 1 subfamily. Homotetramer.

The protein localises to the cytoplasm. The catalysed reaction is L-citrulline + L-aspartate + ATP = 2-(N(omega)-L-arginino)succinate + AMP + diphosphate + H(+). It functions in the pathway amino-acid biosynthesis; L-arginine biosynthesis; L-arginine from L-ornithine and carbamoyl phosphate: step 2/3. In Carboxydothermus hydrogenoformans (strain ATCC BAA-161 / DSM 6008 / Z-2901), this protein is Argininosuccinate synthase.